Consider the following 692-residue polypeptide: Elongation factor G (692 aa).

Positions 8-283 (NRIRNIGIAA…AVIDYLPAPT (276 aa)) constitute a tr-type G domain. Residues 17–24 (AHIDAGKT), 81–85 (DTPGH), and 135–138 (NKMD) each bind GTP.

It belongs to the TRAFAC class translation factor GTPase superfamily. Classic translation factor GTPase family. EF-G/EF-2 subfamily.

The protein localises to the cytoplasm. Its function is as follows. Catalyzes the GTP-dependent ribosomal translocation step during translation elongation. During this step, the ribosome changes from the pre-translocational (PRE) to the post-translocational (POST) state as the newly formed A-site-bound peptidyl-tRNA and P-site-bound deacylated tRNA move to the P and E sites, respectively. Catalyzes the coordinated movement of the two tRNA molecules, the mRNA and conformational changes in the ribosome. This chain is Elongation factor G, found in Helicobacter pylori (strain P12).